The sequence spans 366 residues: Cell division protein FtsY homolog, chloroplastic (366 aa).

Residues 1–40 (MATSSAHLSFLAGRISPFSSERIGLFPLRGEFRPRMTRFR) constitute a chloroplast transit peptide. Residues 171–178 (GVNGGGKT), 254–258 (DTSGR), and 318–321 (TKLD) each bind GTP.

Belongs to the GTP-binding SRP family. Monomer. Interacts with FFC/cpSRP54, a component of the cpSRP complex, composed of a FFC/cpSRP54 monomer and a CAO/cpSRP43 dimer. The complex with FFC/cpSRP54 is formed when both proteins are bound with GTP. Expressed in green tissues. Low levels in roots and seeds.

It localises to the plastid. It is found in the chloroplast stroma. The protein localises to the chloroplast thylakoid membrane. In terms of biological role, signal recognition particle receptor protein. Binds GTP specifically. The GTPase activity is inhibited by the N-terminus of the protein until binding to the thylakoid membrane. Activates the GTPase activity of FFC/cpSRP54 when bound to the cpSRP complex. Required for light-harvesting chlorophyll a/b-binding protein (LHCP) integration into thylakoids. Might be also functionally linked to the Sec translocation machinery. This Arabidopsis thaliana (Mouse-ear cress) protein is Cell division protein FtsY homolog, chloroplastic (CPFTSY).